The primary structure comprises 155 residues: Small ribosomal subunit protein uS8m (155 aa).

Belongs to the universal ribosomal protein uS8 family. Component of the mitochondrial small ribosomal subunit (mt-SSU). Mature yeast 74S mitochondrial ribosomes consist of a small (37S) and a large (54S) subunit. The 37S small subunit contains a 15S ribosomal RNA (15S mt-rRNA) and 34 different proteins. The 54S large subunit contains a 21S rRNA (21S mt-rRNA) and 46 different proteins.

It is found in the mitochondrion. In terms of biological role, component of the mitochondrial ribosome (mitoribosome), a dedicated translation machinery responsible for the synthesis of mitochondrial genome-encoded proteins, including at least some of the essential transmembrane subunits of the mitochondrial respiratory chain. The mitoribosomes are attached to the mitochondrial inner membrane and translation products are cotranslationally integrated into the membrane. In Saccharomyces cerevisiae (strain ATCC 204508 / S288c) (Baker's yeast), this protein is Small ribosomal subunit protein uS8m (MRPS8).